Here is a 317-residue protein sequence, read N- to C-terminus: Testis-specific Y-encoded protein 1 (317 aa).

2 disordered regions span residues 1–39 (MSRPFASAPARGHRQGQEERERRSEEGGSVPGPRTFQVV) and 91–118 (DEEQEQRPSQELEEKTVEEQGQERPGGP). 2 stretches are compositionally biased toward basic and acidic residues: residues 15-26 (QGQEERERRSEE) and 95-112 (EQRPSQELEEKTVEEQGQ).

It belongs to the nucleosome assembly protein (NAP) family. In terms of processing, phosphorylated. Testis. Probably in spermatogonia.

The protein localises to the cytoplasm. It localises to the nucleus. Functionally, may be involved in sperm differentiation and proliferation. This Bos taurus (Bovine) protein is Testis-specific Y-encoded protein 1 (TSPY1).